Here is a 310-residue protein sequence, read N- to C-terminus: Protein-L-isoaspartate O-methyltransferase (310 aa).

A disordered region spans residues 1–41 (MSGERAKRFPLALEDLKRAPRKSEGRPGERQTAGAVPKAAD). The segment covering 14 to 29 (EDLKRAPRKSEGRPGE) has biased composition (basic and acidic residues). Ser-157 is a catalytic residue.

This sequence belongs to the methyltransferase superfamily. L-isoaspartyl/D-aspartyl protein methyltransferase family.

It is found in the cytoplasm. The enzyme catalyses [protein]-L-isoaspartate + S-adenosyl-L-methionine = [protein]-L-isoaspartate alpha-methyl ester + S-adenosyl-L-homocysteine. Functionally, catalyzes the methyl esterification of L-isoaspartyl residues in peptides and proteins that result from spontaneous decomposition of normal L-aspartyl and L-asparaginyl residues. It plays a role in the repair and/or degradation of damaged proteins. This is Protein-L-isoaspartate O-methyltransferase from Burkholderia cenocepacia (strain HI2424).